Here is a 201-residue protein sequence, read N- to C-terminus: Phospholipase A2 inhibitor PIP (201 aa).

An N-terminal signal peptide occupies residues 1–19 (MKSLQTICLLFIFIARGTS). 8 cysteine pairs are disulfide-bonded: cysteine 22–cysteine 46, cysteine 25–cysteine 32, cysteine 39–cysteine 67, cysteine 73–cysteine 94, cysteine 95–cysteine 100, cysteine 118–cysteine 143, cysteine 136–cysteine 165, and cysteine 169–cysteine 191. The N-linked (GlcNAc...) asparagine glycan is linked to asparagine 157.

In terms of assembly, homohexamer. Post-translationally, glycosylated. Expressed by the liver.

The protein resides in the secreted. Functionally, inhibits the enzymatic activity of phospholipase A2 (PA2). Binds to the major PLA2 toxin of D.russelli siamensis (Daboiatoxin, AC Q7T2R1, and AC Q7T3T5) at 1-2-fold molar excess of inhibitor to toxin. It exhibits broad spectra in neutralizing the toxicity of various snake venoms and toxins and inhibits the formation of edema in mice. May bind to PLA2 through its proline-rich hydrophobic core region. This is Phospholipase A2 inhibitor PIP from Malayopython reticulatus (Reticulate python).